Consider the following 763-residue polypeptide: Sphingoid long-chain bases kinase 1 (763 aa).

Positions 34–81 are disordered; that stretch reads TGGSQQSSPIVFPEKRNKKVKASSRRGEVTNDPQVKPKPDEHRIDIGG. Residues 58–81 are compositionally biased toward basic and acidic residues; that stretch reads RRGEVTNDPQVKPKPDEHRIDIGG. Residues 245 to 384 enclose the DAGKc domain; that stretch reads KSAPKMLVIL…TDVFAVEWIH (140 aa). ATP-binding positions include 255 to 257 and T287; that span reads NPR. 313–316 contributes to the substrate binding site; the sequence is GGDG. Residue D315 is the Proton donor/acceptor of the active site. ATP contacts are provided by residues E320, 345–347, and R418; that span reads GSD. The tract at residues 561–603 is disordered; it reads MGLTSVQDPPTRCSWGNTGGQDREDISSTVSDPGPIWDAGPKW. 733-735 is an ATP binding site; that stretch reads DGE.

In terms of tissue distribution, expressed in roots, stems, leaves and at higher levels in flowers.

In terms of biological role, involved in the production of sphingolipid metabolites. Active on sphingosine, phytosphingosine (PHS, 4-hydroxysphinganine), D-erythro-dihydrosphingosine, D-erythro-sphingosine and trans-4, trans-8-sphingadienine, an LCB found exclusively in plants, but not on N-acetyl-dihydrosphingosine (C2-dihydroceramide) and D-threo-dihydrosphingosine. This Arabidopsis thaliana (Mouse-ear cress) protein is Sphingoid long-chain bases kinase 1 (LCBK1).